The sequence spans 163 residues: MTSIAISSGSFDPITLGHLDIIKRGAKVFDEVYVVVLNNSSKKPFFSVEERLELIREATKDIPNVKVDSHSGLLVEYAKMRNANAILRGLRAVSDFEYEMQITSMNRKLDENIETFFIMTNNQYSFLSSSIVKEVARYGGSVVDLVPPIVERALKEKFQTPLK.

Position 10 (Ser10) interacts with substrate. Residues 10-11 (SF) and His18 each bind ATP. Substrate-binding residues include Lys42, Leu74, and Arg88. Residues 89–91 (GLR), Glu99, and 124–130 (YSFLSSS) contribute to the ATP site.

This sequence belongs to the bacterial CoaD family. In terms of assembly, homohexamer. It depends on Mg(2+) as a cofactor.

The protein resides in the cytoplasm. The catalysed reaction is (R)-4'-phosphopantetheine + ATP + H(+) = 3'-dephospho-CoA + diphosphate. Its pathway is cofactor biosynthesis; coenzyme A biosynthesis; CoA from (R)-pantothenate: step 4/5. In terms of biological role, reversibly transfers an adenylyl group from ATP to 4'-phosphopantetheine, yielding dephospho-CoA (dPCoA) and pyrophosphate. In Bacillus cereus (strain G9842), this protein is Phosphopantetheine adenylyltransferase.